The chain runs to 564 residues: MFS-type transporter astH (564 aa).

Asn23 carries N-linked (GlcNAc...) asparagine glycosylation. Residues 26-59 (KDTLVNCSPDPENPEKGQASSPRTQISVDDNEES) are disordered. A compositionally biased stretch (polar residues) spans 43–53 (QASSPRTQISV). The next 4 membrane-spanning stretches (helical) occupy residues 69–89 (LAMIMISLCLAVFCLALDTTI), 106–126 (DVGWYGSAYLLTTSALTLSFG), 143–163 (GMFEIGSLICGATPNSLGLII), and 197–217 (GILGGLFGVASVVGPLIGGAF). N-linked (GlcNAc...) asparagine glycosylation is present at Asn220. The next 6 membrane-spanning stretches (helical) occupy residues 225 to 245 (WCFYINLPLGAVTGLFLILFF), 266 to 286 (LLGSLCFLPAIICVLLALQWG), 297 to 317 (IIALFTVFGVLLLAFAGVQWW), 339 to 359 (LFSFCLNASFIIFTYYLPMWF), 375 to 395 (LPMVLAVVIFSIISGGLVGAL), and 396 to 416 (GYYTPFMVIAPLIAAIGAGLL). An N-linked (GlcNAc...) asparagine glycan is attached at Asn425. Helical transmembrane passes span 461 to 481 (TGTVIVMFMQTIGGAIFMSVG) and 537 to 557 (FYVAVAMAVLALPGALVMQWI).

It belongs to the major facilitator superfamily. TCR/Tet family.

The protein localises to the membrane. MFS-type transporter; part of the gene cluster that mediates the biosynthesis of astellolides, drimane-type sesquiterpene esters that show antimicrobial, anti-inflammatory, and anti-tumor activities. Seems not to be involved in astellolides translocation. In Aspergillus oryzae (strain ATCC 42149 / RIB 40) (Yellow koji mold), this protein is MFS-type transporter astH.